A 593-amino-acid chain; its full sequence is Mitochondrial sodium/calcium exchanger protein (593 aa).

An N-terminal signal peptide occupies residues 1–20 (MGPLWALRVAGALSVAGVLA). Topologically, residues 21-93 (GHDGSQRAGQ…GAFCTFPSSL (73 aa)) are extracellular. N-linked (GlcNAc...) asparagine glycosylation is present at Asn58. A helical transmembrane segment spans residues 94 to 114 (LPLSVSLYALWLLYLFVILGV). The Cytoplasmic portion of the chain corresponds to 115-135 (TAEKFFCPNLSAISTNLKLSH). Residues 136–158 (NGLGVVGHSLTPALHGVTFLAFG) traverse the membrane as a helical segment. At 159-178 (NGAPDIFSAVVAFSDPRTAG) the chain is on the extracellular side. The chain crosses the membrane as a helical span at residues 179–199 (LAVGAIFGAGIFVTTVVAGGI). Residues 200–215 (ALVKPFAAASRPFLRD) lie on the Cytoplasmic side of the membrane. The helical transmembrane segment at 216–236 (VIFYMVAVFLTFLVLYFGYIT) threads the bilayer. Over 237-239 (LGE) the chain is Extracellular. The chain crosses the membrane as a helical span at residues 240–260 (ALGYLGLYVFYVFTVVLCTWI). The Cytoplasmic portion of the chain corresponds to 261–334 (HRWQRGDGPP…KWRRKPWYWR (74 aa)). Over residues 268-277 (GPPPPGPWEP) the composition is skewed to pro residues. Positions 268–291 (GPPPPGPWEPAIPTDAEEQESSGT) are disordered. A helical transmembrane segment spans residues 335-355 (LFKVLKVPVELVLLLTVPVVD). The Extracellular portion of the chain corresponds to 356 to 369 (PDKDDLNWKRPLNC). Residues 370–390 (LHIVTGPLLCIFTLKSGAYGL) form a helical membrane-spanning segment. The Cytoplasmic portion of the chain corresponds to 391-395 (YQIQG). The helical transmembrane segment at 396–416 (VFPVWALVALAGSVLAIIVFV) threads the bilayer. Residues 417–428 (TTHNEEPPKYHC) lie on the Extracellular side of the membrane. Residues 429 to 449 (VFAFLGFLSSAMWINAAATEL) traverse the membrane as a helical segment. Topologically, residues 450–454 (VNILR) are cytoplasmic. Residues 455 to 475 (TLGIIFELSNTVLGLTLLAWG) form a helical membrane-spanning segment. The Extracellular segment spans residues 476-496 (NSIGDTFSDLTMARQGYPRMA). Residues 497-517 (FSACFGGIIFNILVGVGLGCL) form a helical membrane-spanning segment. At 518 to 533 (LQMTNSQMVVKLEPDS) the chain is on the cytoplasmic side. The chain crosses the membrane as a helical span at residues 534–554 (LLVWILAGALGLSLVFSFVAV). At 555-564 (PAQCFQLGKA) the chain is on the extracellular side. A helical transmembrane segment spans residues 565 to 585 (YGTCLILYYLVFLCVALLTEF). The Cytoplasmic segment spans residues 586 to 593 (RVIHLAAT).

This sequence belongs to the Ca(2+):cation antiporter (CaCA) (TC 2.A.19) family. SLC24A subfamily.

The protein localises to the mitochondrion inner membrane. The catalysed reaction is Ca(2+)(in) + 3 Na(+)(out) = Ca(2+)(out) + 3 Na(+)(in). Functionally, mitochondrial sodium/calcium antiporter that mediates sodium-dependent calcium efflux from mitochondrion, by mediating the exchange of 3 sodium ions per 1 calcium ion. Plays a central role in mitochondrial calcium homeostasis by mediating mitochondrial calcium extrusion: calcium efflux is essential for mitochondrial function and cell survival, notably in cardiomyocytes. Involved in B-lymphocyte chemotaxis. The protein is Mitochondrial sodium/calcium exchanger protein of Gallus gallus (Chicken).